We begin with the raw amino-acid sequence, 244 residues long: Zinc import ATP-binding protein ZnuC 2 (244 aa).

Positions 3–218 constitute an ABC transporter domain; it reads IGCASLTIQL…PEYLALFGID (216 aa). 35–42 lines the ATP pocket; the sequence is GPNGSGKT.

It belongs to the ABC transporter superfamily. Zinc importer (TC 3.A.1.15.5) family. In terms of assembly, the complex is composed of two ATP-binding proteins (ZnuC), two transmembrane proteins (ZnuB) and a solute-binding protein (ZnuA).

It localises to the cell inner membrane. It carries out the reaction Zn(2+)(out) + ATP(in) + H2O(in) = Zn(2+)(in) + ADP(in) + phosphate(in) + H(+)(in). Its function is as follows. Part of the ABC transporter complex ZnuABC involved in zinc import. Responsible for energy coupling to the transport system. This chain is Zinc import ATP-binding protein ZnuC 2, found in Hahella chejuensis (strain KCTC 2396).